The following is a 491-amino-acid chain: Putative mannan endo-1,4-beta-mannosidase 5 (491 aa).

The N-terminal stretch at 1 to 31 is a signal peptide; the sequence is METSYREEEARRKASLLHCIFFFLLGALAMA. The substrate site is built by W134 and N248. Catalysis depends on E249, which acts as the Proton donor. Position 330 (Y330) interacts with substrate. E372 functions as the Nucleophile in the catalytic mechanism. A glycan (N-linked (GlcNAc...) asparagine) is linked at N385. Substrate is bound at residue W416. A glycan (N-linked (GlcNAc...) asparagine) is linked at N471.

It belongs to the glycosyl hydrolase 5 (cellulase A) family. As to expression, expression not detected.

The protein localises to the secreted. It carries out the reaction Random hydrolysis of (1-&gt;4)-beta-D-mannosidic linkages in mannans, galactomannans and glucomannans.. The protein is Putative mannan endo-1,4-beta-mannosidase 5 (MAN5) of Oryza sativa subsp. japonica (Rice).